An 878-amino-acid polypeptide reads, in one-letter code: Phosphoenolpyruvate carboxylase (878 aa).

Catalysis depends on residues H138 and K544.

The protein belongs to the PEPCase type 1 family. It depends on Mg(2+) as a cofactor.

The catalysed reaction is oxaloacetate + phosphate = phosphoenolpyruvate + hydrogencarbonate. Functionally, forms oxaloacetate, a four-carbon dicarboxylic acid source for the tricarboxylic acid cycle. This Psychromonas ingrahamii (strain DSM 17664 / CCUG 51855 / 37) protein is Phosphoenolpyruvate carboxylase.